A 195-amino-acid chain; its full sequence is PRS fimbrial minor pilin protein (195 aa).

An N-terminal signal peptide occupies residues 1–22 (MRLRFSVPLFFFGCVFVHGVFA). A disulfide bond links C58 and C97.

This sequence belongs to the fimbrial protein family.

It localises to the secreted. It is found in the fimbrium. Fimbriae (also called pili), polar filaments radiating from the surface of the bacterium to a length of 0.5-1.5 micrometers and numbering 100-300 per cell, enable bacteria to colonize the epithelium of specific host organs. In terms of biological role, seems to anchor the pilus to the bacterial cell. In addition the stoichiometric relationship between PrsH and PrsA determines the pilus length. This is PRS fimbrial minor pilin protein (prsH) from Escherichia coli.